The chain runs to 1040 residues: Protocadherin-10 (1040 aa).

The N-terminal stretch at 1–18 (MIVLLLFALLWMVEGVFS) is a signal peptide. 6 consecutive Cadherin domains span residues 19-122 (QLHY…PPSF), 123-250 (PEPD…VPAF), 251-358 (DQPV…APEI), 359-463 (SFST…APRF), 464-574 (SQPV…APAI), and 582-690 (NGTP…GGGG). Over 19 to 715 (QLHYTVQEEQ…GGGETSLDLT (697 aa)) the chain is Extracellular. Over residues 207-223 (GGGGGVGEGGGGGGGAG) the composition is skewed to gly residues. Residues 207-228 (GGGGGVGEGGGGGGGAGLPPQQ) form a disordered region. The N-linked (GlcNAc...) asparagine glycan is linked to asparagine 273. Asparagine 557 carries an N-linked (GlcNAc...) asparagine glycan. Residues 686–697 (QGGGGSGGGGSG) are compositionally biased toward gly residues. The disordered stretch occupies residues 686–708 (QGGGGSGGGGSGEHQRPSRSGGG). The helical transmembrane segment at 716–736 (LILIIALGSVSFIFLLAMIVL) threads the bilayer. At 737-1040 (AVRCQKEKKL…PPYLTRKRIC (304 aa)) the chain is on the cytoplasmic side. The interval 899-927 (AFQEADIVSSKDSGHGDSEQGDSDHDATN) is disordered. Residues 910–926 (DSGHGDSEQGDSDHDAT) are compositionally biased toward basic and acidic residues.

Moderately expressed in all regions of the brain examined, as well as in testis and ovary, and low expression in all other tissues tested.

Its subcellular location is the cell membrane. In terms of biological role, potential calcium-dependent cell-adhesion protein. Functionally, (Microbial infection) Acts as a receptor for Western equine encephalitis virus. In Homo sapiens (Human), this protein is Protocadherin-10 (PCDH10).